Reading from the N-terminus, the 70-residue chain is Small, acid-soluble spore protein I (70 aa).

It belongs to the SspI family.

It is found in the spore core. This is Small, acid-soluble spore protein I from Bacillus cytotoxicus (strain DSM 22905 / CIP 110041 / 391-98 / NVH 391-98).